Here is a 576-residue protein sequence, read N- to C-terminus: RNA-directed RNA polymerase subunit beta (576 aa).

A RdRp catalytic domain is found at 259–391 (RLARDGSLLN…PNRKKTFCDG (133 aa)). Mg(2+) contacts are provided by Asp274, Asp359, and Asp360.

In terms of assembly, homodimer; the replicase complex can dimerize. Part of the viral RNA-dependent RNA polymerase complex, the other subunits are the host ribosomal protein S1, EF-Tu and EF-Ts. S1 is needed for the initiation of genomic RNA (+)-strand replication. The cofactor is Mg(2+).

The enzyme catalyses RNA(n) + a ribonucleoside 5'-triphosphate = RNA(n+1) + diphosphate. This is the catalytic subunit of the viral RNA-dependent RNA polymerase complex. This complex is involved in viral RNA replication that produces (+)-stranded genomes via a complementary, (-)-stranded intermediate. Binds RNA cooperatively with the host ribosomal protein S1. The protein is RNA-directed RNA polymerase subunit beta of Enterobacteria phage SP (Bacteriophage SP).